The chain runs to 640 residues: CREB3 regulatory factor (640 aa).

Residues 308–414 form a disordered region; it reads SPGLVATAES…FSEPGYENDS (107 aa). A compositionally biased stretch (low complexity) spans 317–329; that stretch reads SGSLSASTSVSDS. A compositionally biased stretch (acidic residues) spans 356–371; sequence EDDEDDEDEFDDEDHD. Residues 372-381 show a composition bias toward basic and acidic residues; the sequence is EGFGSEHELS. The segment covering 382-402 has biased composition (acidic residues); sequence ENEEEEEEEEDYEDDRDDDIS. Residues 522–585 enclose the bZIP domain; sequence TARPRSRKEK…VNRVQNPREE (64 aa). Residues 524–533 are basic motif; the sequence is RPRSRKEKNK. The leucine-zipper stretch occupies residues 534–541; it reads LASRACRL.

It belongs to the bZIP family. CREBRF subfamily. Interacts (via leucine-zipper domain) with CREB3 (via leucine-zipper domain); the interaction promotes CREB3 degradation. In terms of processing, probably degraded by the proteasome. In terms of tissue distribution, highly expressed in intestin, testis, heart and kidney, weakly in brain adipose, colon, liver, lung and skeletal.

Its subcellular location is the nucleus. Its function is as follows. Acts as a negative regulator of the endoplasmic reticulum stress response or unfolded protein response (UPR). Represses the transcriptional activity of CREB3 during the UPR. Recruits CREB3 into nuclear foci. The protein is CREB3 regulatory factor (Crebrf) of Mus musculus (Mouse).